Here is a 293-residue protein sequence, read N- to C-terminus: Elongation factor Ts (293 aa).

The segment at 80–83 (TDFV) is involved in Mg(2+) ion dislocation from EF-Tu.

It belongs to the EF-Ts family.

It is found in the cytoplasm. Functionally, associates with the EF-Tu.GDP complex and induces the exchange of GDP to GTP. It remains bound to the aminoacyl-tRNA.EF-Tu.GTP complex up to the GTP hydrolysis stage on the ribosome. The protein is Elongation factor Ts of Paraburkholderia phymatum (strain DSM 17167 / CIP 108236 / LMG 21445 / STM815) (Burkholderia phymatum).